The primary structure comprises 336 residues: Meiotically up-regulated gene 33 protein (336 aa).

The disordered stretch occupies residues 232 to 336; the sequence is ISEDDGLKRG…KPSRFSWGRS (105 aa). Over residues 250–262 the composition is skewed to polar residues; it reads TFSNDSRSLSSYA.

Its subcellular location is the cytoplasm. Has a role in meiosis. The chain is Meiotically up-regulated gene 33 protein (mug33) from Schizosaccharomyces pombe (strain 972 / ATCC 24843) (Fission yeast).